The following is a 500-amino-acid chain: UBX domain-containing protein 5 (500 aa).

Residues 50–61 are compositionally biased toward low complexity; sequence SNNTPTPSNSTP. The interval 50-70 is disordered; the sequence is SNNTPTPSNSTPMAPTSVDSD. Ser139 carries the post-translational modification Phosphoserine. Disordered stretches follow at residues 142-169 and 371-399; these read NQRL…EEND and ESLN…QEPD. Residues 148-161 are compositionally biased toward low complexity; that stretch reads TNTNTYINDNSSDS. Residues 415 to 493 form the UBX domain; it reads KPGITTRIQI…GLKNSSLLLE (79 aa).

As to quaternary structure, interacts with CDC48.

The protein localises to the nucleus. It localises to the cytoplasm. In terms of biological role, involved in CDC48-dependent protein degradation through the ubiquitin/proteasome pathway. The polypeptide is UBX domain-containing protein 5 (UBX5) (Saccharomyces cerevisiae (strain ATCC 204508 / S288c) (Baker's yeast)).